The sequence spans 331 residues: MGEKDIPRNLKEEEEEEEENQSEETKSLISSLPSDIDCSGTKLYKYQGCWYDKDILQAILNFNKNFQPQETDIIVASFPKSGTTWLKALTFALAQRSKHTSDNHPLLTHNPHELVPYLELDLYLKSSKPDLTKLPSSSPRLFSTHMSFDALKVPLKESPCKIVYVCRNVKDVLVSLWCFENSMSGENNLSLEALFESLCSGVNLCGPLWENVLGYWRGSLEDPKHVLFLRYEELKTEPRVQIKRLAEFLDCPFTKEEEDSGGVDKILELCSLRNLSGLEINKTGSLSEGVSFKSFFRKGEVGDWKSYMTPEMENKIDMIVEEKLQGSGLKL.

Basic and acidic residues predominate over residues 1–11 (MGEKDIPRNLK). The disordered stretch occupies residues 1–31 (MGEKDIPRNLKEEEEEEEENQSEETKSLISS). Residues 12–22 (EEEEEEEENQS) show a composition bias toward acidic residues. 80-85 (KSGTTW) contacts 3'-phosphoadenylyl sulfate. The active-site Proton acceptor is the His-145. 3'-phosphoadenylyl sulfate-binding positions include Arg-167, Ser-175, Tyr-231, and 297 to 299 (RKG).

Belongs to the sulfotransferase 1 family. In terms of tissue distribution, expressed in seedlings and roots.

Its subcellular location is the cytoplasm. Sulfotransferase that utilizes 3'-phospho-5'-adenylyl sulfate (PAPS) as sulfonate donor. No activity with brassinosteroids. The protein is Cytosolic sulfotransferase 8 (SOT8) of Arabidopsis thaliana (Mouse-ear cress).